A 379-amino-acid chain; its full sequence is MSDRAFDTPVWHHGKALRKGYTTGSCATAAAKVAALMALRQQPIHQIAIVTPSGVTLNLSVESPHIEGEQAIAAIRKDGGDDVDATHGMLIFARVTLNDSGAISLSGGEGIGTVTRKGIGLPIGSAAINRTPRHTIESAVREAIGPTRGAAVEIFAPEGVARAQKTYNARLGILGGISIIGTTGIVTPMSEESWKRSLALTLEMKRAAGMTRVVLVPGNHGERFVREQMGIAADAVVTMSNFVGYMVEEAVRLGFRQIVLVGHPGKLIKVAAGIFHTHSHMADARMETLVAHLALLGAPLALLTRVRDCDTTEAAMEHIDAYGFQSLYDHLAARICQRVIERLRFTQNLPICDAILFSFDNRTLGSNRPVAAIVEDLRC.

Belongs to the CbiD family.

It carries out the reaction Co-precorrin-5B + S-adenosyl-L-methionine = Co-precorrin-6A + S-adenosyl-L-homocysteine. It functions in the pathway cofactor biosynthesis; adenosylcobalamin biosynthesis; cob(II)yrinate a,c-diamide from sirohydrochlorin (anaerobic route): step 6/10. In terms of biological role, catalyzes the methylation of C-1 in cobalt-precorrin-5B to form cobalt-precorrin-6A. In Edwardsiella ictaluri (strain 93-146), this protein is Cobalt-precorrin-5B C(1)-methyltransferase.